The following is a 444-amino-acid chain: Glutamate--tRNA ligase 2 (444 aa).

The short motif at 7–17 (PSPTGYLHVGN) is the 'HIGH' region element. The 'KMSKS' region motif lies at 240-244 (KLSKR). Position 243 (lysine 243) interacts with ATP.

It belongs to the class-I aminoacyl-tRNA synthetase family. Glutamate--tRNA ligase type 1 subfamily. In terms of assembly, monomer.

It localises to the cytoplasm. The enzyme catalyses tRNA(Glu) + L-glutamate + ATP = L-glutamyl-tRNA(Glu) + AMP + diphosphate. Catalyzes the attachment of glutamate to tRNA(Glu) in a two-step reaction: glutamate is first activated by ATP to form Glu-AMP and then transferred to the acceptor end of tRNA(Glu). This is Glutamate--tRNA ligase 2 from Gluconobacter oxydans (strain 621H) (Gluconobacter suboxydans).